The following is a 720-amino-acid chain: Proline-rich receptor-like protein kinase PERK12 (720 aa).

Residues 1–240 (MSDLGESPSS…GNGDGGGGGG (240 aa)) form a disordered region. The Extracellular segment spans residues 1–246 (MSDLGESPSS…GGGGGYQGKT (246 aa)). A compositionally biased stretch (pro residues) spans 10–25 (SSPPAPPADTAPPPET). The span at 26 to 35 (PSENSALPPV) shows a compositional bias: low complexity. Composition is skewed to pro residues over residues 52-84 (LSEPSTPPPDSQLPPLPSILPPLTDSPPPPSDS) and 92-116 (PSPPPPTSNESPSPPEDSETPPAPP). An N-linked (GlcNAc...) asparagine glycan is attached at asparagine 117. Composition is skewed to pro residues over residues 123–138 (NPPPSQDLQSPPPSSP) and 147–207 (PESP…PPKT). A helical membrane pass occupies residues 247-267 (MVGMAVAGFAIMALIGVVFLV). Over 268–720 (RRKKKRNIDS…ETRPFNNRRF (453 aa)) the chain is Cytoplasmic. Residues 300 to 349 (QDPGKGYSSGPNGSMYNNSQQQQSSMGNSYGTAGGGYPHHQMQSSGTPDS) form a disordered region. Low complexity predominate over residues 311–330 (NGSMYNNSQQQQSSMGNSYG). The region spanning 371-624 (FARKNILGEG…EVFRMIETAA (254 aa)) is the Protein kinase domain. Residues 377–385 (LGEGGFGCV) and lysine 399 each bind ATP. At tyrosine 444 the chain carries Phosphotyrosine. Aspartate 495 acts as the Proton acceptor in catalysis. Serine 528 is modified (phosphoserine). Phosphothreonine is present on residues threonine 529 and threonine 534. Tyrosine 542 is modified (phosphotyrosine). The segment at 698–720 (SAKSSSDFSGNESETRPFNNRRF) is disordered.

This sequence belongs to the protein kinase superfamily. Ser/Thr protein kinase family. In terms of tissue distribution, mostly expressed in apical parts, including flower buds, and particularly in anthers. Also present in root hairs.

The protein resides in the cell membrane. The catalysed reaction is L-seryl-[protein] + ATP = O-phospho-L-seryl-[protein] + ADP + H(+). The enzyme catalyses L-threonyl-[protein] + ATP = O-phospho-L-threonyl-[protein] + ADP + H(+). Functionally, regulates the auxin-related MAX (More Axillary Growth) pathway during the shoot branching. The sequence is that of Proline-rich receptor-like protein kinase PERK12 (PERK12) from Arabidopsis thaliana (Mouse-ear cress).